A 328-amino-acid chain; its full sequence is Carbonic anhydrase-related protein 11 (328 aa).

A signal peptide spans 1–23 (MGAAARLSAPRALVLWAALGAAA). The Alpha-carbonic anhydrase domain maps to 33–303 (DWWSYKDNLQ…LAHRALRGNR (271 aa)). 3 N-linked (GlcNAc...) asparagine glycosylation sites follow: N118, N170, and N260. Residues 299 to 328 (LRGNRDPRHPERRCRGPNYRLHVDGVPHGR) are disordered. Residues 319–328 (LHVDGVPHGR) are compositionally biased toward basic and acidic residues.

Belongs to the alpha-carbonic anhydrase family. In terms of tissue distribution, expressed abundantly in the brain with moderate expression also present in spinal cord and thyroid.

It localises to the secreted. Its function is as follows. Does not have a catalytic activity. This chain is Carbonic anhydrase-related protein 11 (CA11), found in Homo sapiens (Human).